We begin with the raw amino-acid sequence, 299 residues long: Biotin transporter (299 aa).

The next 10 membrane-spanning stretches (helical) occupy residues 2 to 22, 26 to 46, 56 to 76, 81 to 101, 110 to 130, 137 to 157, 172 to 192, 202 to 222, 233 to 253, and 256 to 276; these read ALLI…GEYL, VDSY…FLPF, TISL…MLSF, YLTV…ITLI, LRWG…IIRY, FWVG…GMVG, AFAW…SLLG, LQWS…YFMW, TLGI…LAIW, and QPHW…LWVH. 2 consecutive EamA domains span residues 3 to 128 and 139 to 274; these read LLII…AGII and VGLL…ASLW.

The protein belongs to the drug/metabolite transporter (DMT) superfamily. 10 TMS drug/metabolite exporter (DME) (TC 2.A.7.3) family.

It localises to the cell inner membrane. It carries out the reaction biotin(in) = biotin(out). Functionally, uptake of biotin. The chain is Biotin transporter from Salmonella typhi.